The primary structure comprises 683 residues: uncharacterized protein (683 aa).

The next 14 helical transmembrane spans lie at 12–32, 41–61, 84–104, 110–130, 162–182, 194–214, 221–241, 377–397, 413–433, 495–515, 548–568, 573–593, 603–623, and 645–665; these read LLLYYGLFTLGLFGFVGMMGL, LWLGYVFLFITIAIYACIGLI, MAIAADWMSAASFIGLAGILF, GLAYVMGWTGGYCLVAFLLAP, IAVLAASLCSFVYLVAQIQGV, FAVGIFFGLAGILVCSFLGGM, QVAQYIMMIVAFLVTVSMIAW, LNFVLLVFCLMVGTASLPHIL, VAWAVFFIALLYVSAPTLAAL, IAGLPYVISGLIAAGALAAAL, VTTAKIVLLGVALFASYVTSL, ILFLVGAAFSLAASSFFPVLV, AAGAVAGMAAGLGVAVYYIIV, and IASGAFGVPAGFAVAIIVSLL.

The protein belongs to the sodium:solute symporter (SSF) (TC 2.A.21) family.

The protein resides in the cell membrane. This is an uncharacterized protein from Cupriavidus necator (strain ATCC 17699 / DSM 428 / KCTC 22496 / NCIMB 10442 / H16 / Stanier 337) (Ralstonia eutropha).